Reading from the N-terminus, the 281-residue chain is Microtubule-associated protein RP/EB family member 3 (281 aa).

A Calponin-homology (CH) domain is found at Asn-14 to Asp-116. Disordered regions lie at residues Val-157–Pro-181 and Glu-260–Tyr-281. Residues Pro-158–Leu-175 are compositionally biased toward polar residues. Phosphoserine occurs at positions 162 and 176. The 71-residue stretch at Gly-194 to Pro-264 folds into the EB1 C-terminal domain. The tract at residues Asp-217–Glu-260 is APC-binding. The segment at Asp-217–Tyr-281 is DCTN1-binding. The span at Glu-272–Tyr-281 shows a compositional bias: basic and acidic residues.

It belongs to the MAPRE family. Homodimer. Heterodimer with MAPRE1. Binds monomeric and polymerized GTP-bound tubulin. Interacts with DCTN1 and SRCIN1. Binds to the C-terminal domain of APC. Interacts (via C-terminus) with CLIP1. Interacts with SLAIN2. Interacts with SLAIN1. Interacts with APC2. Interacts with AKAP9. Interacts with PDE4DIP isoform 2/MMG8/SMYLE; this interaction is required for its recruitment to the Golgi apparatus.

The protein resides in the cytoplasm. The protein localises to the cytoskeleton. Functionally, plus-end tracking protein (+TIP) that binds to the plus-end of microtubules and regulates the dynamics of the microtubule cytoskeleton. Promotes microtubule growth. May be involved in spindle function by stabilizing microtubules and anchoring them at centrosomes. Also acts as a regulator of minus-end microtubule organization: interacts with the complex formed by AKAP9 and PDE4DIP, leading to recruit CAMSAP2 to the Golgi apparatus, thereby tethering non-centrosomal minus-end microtubules to the Golgi, an important step for polarized cell movement. Promotes elongation of CAMSAP2-decorated microtubule stretches on the minus-end of microtubules. The sequence is that of Microtubule-associated protein RP/EB family member 3 (Mapre3) from Mus musculus (Mouse).